We begin with the raw amino-acid sequence, 174 residues long: Co-chaperone protein HscB homolog (174 aa).

The region spanning 2-74 (NYFELFSLLP…IQRAEHLLTL (73 aa)) is the J domain.

The protein belongs to the HscB family. In terms of assembly, interacts with HscA and stimulates its ATPase activity.

Co-chaperone involved in the maturation of iron-sulfur cluster-containing proteins. Seems to help targeting proteins to be folded toward HscA. In Shewanella halifaxensis (strain HAW-EB4), this protein is Co-chaperone protein HscB homolog.